A 164-amino-acid polypeptide reads, in one-letter code: Large ribosomal subunit protein uL15 (164 aa).

A disordered region spans residues 1–52 (MSLSKLKAPKGANRERTRVGRGQGSGLGKTAGRGGKGQKARSGNMHFEGFEG). Over residues 21-37 (RGQGSGLGKTAGRGGKG) the composition is skewed to gly residues.

This sequence belongs to the universal ribosomal protein uL15 family. In terms of assembly, part of the 50S ribosomal subunit.

Functionally, binds to the 23S rRNA. The chain is Large ribosomal subunit protein uL15 from Anaeromyxobacter sp. (strain Fw109-5).